A 426-amino-acid chain; its full sequence is Isovaleryl-CoA dehydrogenase, mitochondrial (426 aa).

A mitochondrion-targeting transit peptide spans 1–32; that stretch reads MATAAWLLGRRVASWRMRPPLQSLAGLITQRT. N6-acetyllysine; alternate is present on residues lysine 58 and lysine 78. Lysine 58 and lysine 78 each carry N6-succinyllysine; alternate. FAD-binding positions include 165 to 174 and 198 to 200; these read LAMSEPNAGS and WIT. Position 174 (serine 174) interacts with substrate. 222 to 223 serves as a coordination point for substrate; that stretch reads SR. Lysine 241 carries the post-translational modification N6-acetyllysine. Substrate contacts are provided by residues tyrosine 277 and 284-287; that span reads DLER. Glutamate 286 acts as the Proton acceptor in catalysis. Arginine 312 serves as a coordination point for FAD. The residue at position 318 (lysine 318) is an N6-succinyllysine. FAD is bound by residues glutamine 323 and 380-384; that span reads QCLGG. Substrate is bound at residue 407 to 408; it reads AG. 409–411 contacts FAD; the sequence is TSE.

It belongs to the acyl-CoA dehydrogenase family. As to quaternary structure, homotetramer. The cofactor is FAD.

The protein localises to the mitochondrion matrix. The enzyme catalyses 3-methylbutanoyl-CoA + oxidized [electron-transfer flavoprotein] + H(+) = 3-methylbut-2-enoyl-CoA + reduced [electron-transfer flavoprotein]. It carries out the reaction pentanoyl-CoA + oxidized [electron-transfer flavoprotein] + H(+) = (2E)-pentenoyl-CoA + reduced [electron-transfer flavoprotein]. The catalysed reaction is hexanoyl-CoA + oxidized [electron-transfer flavoprotein] + H(+) = (2E)-hexenoyl-CoA + reduced [electron-transfer flavoprotein]. It catalyses the reaction butanoyl-CoA + oxidized [electron-transfer flavoprotein] + H(+) = (2E)-butenoyl-CoA + reduced [electron-transfer flavoprotein]. It participates in amino-acid degradation; L-leucine degradation; (S)-3-hydroxy-3-methylglutaryl-CoA from 3-isovaleryl-CoA: step 1/3. In terms of biological role, catalyzes the conversion of isovaleryl-CoA/3-methylbutanoyl-CoA to 3-methylbut-2-enoyl-CoA as an intermediate step in the leucine (Leu) catabolic pathway. To a lesser extent, is also able to catalyze the oxidation of other saturated short-chain acyl-CoA thioesters as pentanoyl-CoA, hexenoyl-CoA and butenoyl-CoA. The polypeptide is Isovaleryl-CoA dehydrogenase, mitochondrial (IVD) (Bos taurus (Bovine)).